Consider the following 383-residue polypeptide: MTIRKSNPYLSLVNSYLMDSPQPSSMNYWWNVGSLLGLCLVMQMASGMFLAMHYSSSMELAFNSVEHMMRDVNAGWLMRYIHANGASFFFMCLYLHMGKALYYGSYKSPRVLVWSMGVMMFMLTMATAFMGYCLVYGQMSHWGATVITNLLSAMPFMGGDLVPFIWGGFSVSNPTMQRFFALHYLLPFILAALVVMHFMALHVHGSSNPMGMSGNMDRLPMHGYFVFKDLMTVFVFILMFSLFVFYSPNTLGHSDNYMPANPMVTPPSIVPEWYLLPFYAMLRSMPDKLGGVMAMFAALLMLLMLPMTDRSVMRGNTFKMLSKLSFYLFLFNFFLLMNMGQLHVEVPFIELGQFATVYYFSYFLMLVPVMSSMENMLFYMGNK.

A run of 4 helical transmembrane segments spans residues 32–52 (VGSL…FLAM), 76–98 (WLMR…LHMG), 113–133 (VWSM…MGYC), and 179–199 (FFAL…MHFM). Heme b contacts are provided by histidine 82 and histidine 96. The heme b site is built by histidine 183 and histidine 197. Histidine 202 contacts a ubiquinone. The next 4 helical transmembrane spans lie at 225-245 (FVFK…LFVF), 289-309 (LGGV…PMTD), 321-341 (LSKL…NMGQ), and 348-368 (FIEL…MLVP).

It belongs to the cytochrome b family. As to quaternary structure, fungal cytochrome b-c1 complex contains 10 subunits; 3 respiratory subunits, 2 core proteins and 5 low-molecular weight proteins. Cytochrome b-c1 complex is a homodimer. It depends on heme b as a cofactor.

It is found in the mitochondrion inner membrane. In terms of biological role, component of the ubiquinol-cytochrome c reductase complex (complex III or cytochrome b-c1 complex) that is part of the mitochondrial respiratory chain. The b-c1 complex mediates electron transfer from ubiquinol to cytochrome c. Contributes to the generation of a proton gradient across the mitochondrial membrane that is then used for ATP synthesis. The polypeptide is Cytochrome b (COB) (Debaryomyces hansenii (strain ATCC 36239 / CBS 767 / BCRC 21394 / JCM 1990 / NBRC 0083 / IGC 2968) (Yeast)).